We begin with the raw amino-acid sequence, 452 residues long: Alkane uptake protein A (452 aa).

An N-terminal signal peptide occupies residues 1-36 (MSERSVYMVLSPRFSVRAVSLAVAAVSASLSMPTSA).

Belongs to the OmpP1/FadL family. As to quaternary structure, interacts with the inner membrane protein AupB.

It localises to the cell outer membrane. Required for growth on alkanes. Probably involved in the uptake of micelle-solubilized alkanes. This is Alkane uptake protein A from Marinobacter nauticus (strain ATCC 49840 / DSM 8798 / CIP 103578 / SP17) (Marinobacter hydrocarbonoclasticus).